Here is a 254-residue protein sequence, read N- to C-terminus: 5-keto-D-gluconate 5-reductase (254 aa).

L13 to I37 is an NADP(+) binding site. Substrate is bound at residue S145. Catalysis depends on Y158, which acts as the Proton acceptor.

This sequence belongs to the short-chain dehydrogenases/reductases (SDR) family.

It carries out the reaction D-gluconate + NAD(+) = 5-dehydro-D-gluconate + NADH + H(+). The enzyme catalyses D-gluconate + NADP(+) = 5-dehydro-D-gluconate + NADPH + H(+). Its pathway is carbohydrate acid metabolism; L-idonate degradation. In terms of biological role, catalyzes the reduction of 5-keto-D-gluconate to D-gluconate, using either NADH or NADPH. Is likely involved in an L-idonate degradation pathway that allows E.coli to utilize L-idonate as the sole carbon and energy source. Is also able to catalyze the reverse reaction in vitro, but the D-gluconate oxidation by the enzyme can only proceed with NAD. The sequence is that of 5-keto-D-gluconate 5-reductase from Escherichia coli O6:H1 (strain CFT073 / ATCC 700928 / UPEC).